The primary structure comprises 542 residues: Chaperonin GroEL 3 (542 aa).

ATP-binding positions include 30-33, K51, 87-91, G415, and D496; these read TLGP and DGTTT.

Belongs to the chaperonin (HSP60) family. Forms a cylinder of 14 subunits composed of two heptameric rings stacked back-to-back. Interacts with the co-chaperonin GroES.

The protein localises to the cytoplasm. It catalyses the reaction ATP + H2O + a folded polypeptide = ADP + phosphate + an unfolded polypeptide.. Its function is as follows. Together with its co-chaperonin GroES, plays an essential role in assisting protein folding. The GroEL-GroES system forms a nano-cage that allows encapsulation of the non-native substrate proteins and provides a physical environment optimized to promote and accelerate protein folding. The chain is Chaperonin GroEL 3 from Rhizobium johnstonii (strain DSM 114642 / LMG 32736 / 3841) (Rhizobium leguminosarum bv. viciae).